Consider the following 304-residue polypeptide: D-alanine--D-alanine ligase (304 aa).

Residues 103–299 (KLIWQALGLP…FADLCIEILK (197 aa)) form the ATP-grasp domain. 129-184 (EEKLGLPMFVKPAAEGSSVGVVKVKGKGRLKSVYEELKHFQGEIIAERFIGGGEYS) is an ATP binding site. 3 residues coordinate Mg(2+): Asp253, Glu266, and Asn268.

It belongs to the D-alanine--D-alanine ligase family. Requires Mg(2+) as cofactor. It depends on Mn(2+) as a cofactor.

It localises to the cytoplasm. It carries out the reaction 2 D-alanine + ATP = D-alanyl-D-alanine + ADP + phosphate + H(+). It participates in cell wall biogenesis; peptidoglycan biosynthesis. Functionally, cell wall formation. The protein is D-alanine--D-alanine ligase of Neisseria meningitidis serogroup A / serotype 4A (strain DSM 15465 / Z2491).